A 427-amino-acid chain; its full sequence is Nucleolar and spindle-associated protein 1 (427 aa).

Positions 41 to 190 are disordered; that stretch reads AHLNPETRKE…LGNNKRTSAT (150 aa). Residues 43 to 55 are compositionally biased toward basic and acidic residues; it reads LNPETRKENKNQD. The segment covering 83-96 has biased composition (basic residues); sequence TKTRRRRRKKHKTI. Residues 119 to 128 show a composition bias toward low complexity; the sequence is NFQNQENQEN. The residue at position 139 (S139) is a Phosphoserine. Basic and acidic residues predominate over residues 159 to 179; it reads NDIKDSKKPLEKRSLCTDEFS. Residues 181–190 are compositionally biased toward polar residues; it reads LGNNKRTSAT. T191 is modified (phosphothreonine). The interval 235–312 is disordered; sequence IVTPVPPRGR…QAVFRTPKSK (78 aa). An interaction with microtubules region spans residues 243-367; sequence GRLSVPCTPA…HKGKLKPWGQ (125 aa). S246 is modified (phosphoserine). T250 bears the Phosphothreonine mark. The span at 252–264 shows a compositional bias: polar residues; sequence ARQQCPQGHSATK. Phosphoserine is present on S261. 2 positions are modified to phosphothreonine: T323 and T334. Residues S337 and S348 each carry the phosphoserine modification. A disordered region spans residues 354-427; it reads NYKPHKGKLK…RRNLGVTKAQ (74 aa). The KEN box motif lies at 369 to 375; the sequence is KENNSLN. Residues 393–425 adopt a coiled-coil conformation; it reads LQTREERWKRQEQERKEKKEKLLEARRNLGVTK. Basic and acidic residues predominate over residues 394 to 419; sequence QTREERWKRQEQERKEKKEKLLEARR.

Belongs to the NUSAP family. Interacts with DNA and microtubules. Microtubule bundling is inhibited by IPO7, KPNA2 and KPNB1 while association with DNA is also inhibited by IPO7 and KPNA2. In terms of processing, ubiquitinated. Ubiquitination by FZR1 may lead to proteasome-dependent degradation of this protein.

The protein localises to the cytoplasm. It is found in the nucleus. The protein resides in the nucleolus. Its subcellular location is the cytoskeleton. It localises to the spindle. The protein localises to the chromosome. Microtubule-associated protein with the capacity to bundle and stabilize microtubules. May associate with chromosomes and promote the organization of mitotic spindle microtubules around them. This chain is Nucleolar and spindle-associated protein 1 (Nusap1), found in Mus musculus (Mouse).